Reading from the N-terminus, the 957-residue chain is Serine-aspartate repeat-containing protein C (957 aa).

Residues 1 to 50 (MNNKKTVTNRKGMIPNRLNKFSIRKYSVGTASILVGTTLIFGLSGHEAKA) form the signal peptide. Residues 51-166 (AEHTNGELNQ…TPKTTTIKPR (116 aa)) are disordered. Positions 51–495 (AEHTNGELNQ…GSSTANGDQK (445 aa)) are ligand binding A region. The span at 56–71 (GELNQSKNETTAPSEN) shows a compositional bias: polar residues. Basic and acidic residues predominate over residues 72 to 83 (KTTEKVDSRQLK). Residues 84 to 114 (DNTQTATADQPKVTMSDSATVKETSSNMQSP) show a composition bias toward polar residues. The span at 115 to 132 (QNATASQSTTQTSNVTTN) shows a compositional bias: low complexity. Residues 133-164 (DKSSTTYSNETDKSNLTQAKDVSATPKTTTIK) show a composition bias toward polar residues. CNA-B domains lie at 496 to 606 (KYNL…YKTP) and 607 to 717 (KYSL…EEET). Residues 678 to 937 (TQTGTNTTED…NNSNNGTLFG (260 aa)) form a disordered region. Composition is skewed to acidic residues over residues 685 to 695 (TEDDKDADGGE) and 712 to 896 (YYEE…DSDS). An LPXTG sorting signal motif is present at residues 920 to 924 (LPETG). A compositionally biased stretch (low complexity) spans 922 to 937 (ETGSENNNSNNGTLFG). T923 is subject to Pentaglycyl murein peptidoglycan amidated threonine. The propeptide at 924 to 957 (GSENNNSNNGTLFGGLFAALGSLLLFGRRKKQNK) is removed by sortase.

It belongs to the serine-aspartate repeat-containing protein (SDr) family. Homodimerizes; via N2-Domain. Interacts with host NRXN1; this interaction mediates bacterial attachment to host cells.

It localises to the secreted. The protein resides in the cell wall. Functionally, cell surface-associated calcium-binding protein which plays an important role in adhesion and pathogenesis. Mediates interactions with components of the extracellular matrix such as host NRXN1 to promote bacterial adhesion. In Staphylococcus aureus (strain MSSA476), this protein is Serine-aspartate repeat-containing protein C (sdrC).